The sequence spans 225 residues: 7-cyano-7-deazaguanine synthase (225 aa).

9–19 (YSGGLDSTTCL) provides a ligand contact to ATP. 4 residues coordinate Zn(2+): Cys-188, Cys-198, Cys-201, and Cys-204.

This sequence belongs to the QueC family. It depends on Zn(2+) as a cofactor.

The catalysed reaction is 7-carboxy-7-deazaguanine + NH4(+) + ATP = 7-cyano-7-deazaguanine + ADP + phosphate + H2O + H(+). The protein operates within purine metabolism; 7-cyano-7-deazaguanine biosynthesis. Its function is as follows. Catalyzes the ATP-dependent conversion of 7-carboxy-7-deazaguanine (CDG) to 7-cyano-7-deazaguanine (preQ(0)). The chain is 7-cyano-7-deazaguanine synthase from Geobacter sp. (strain M21).